A 583-amino-acid polypeptide reads, in one-letter code: Aspartate--tRNA(Asp/Asn) ligase (583 aa).

Glu-173 contributes to the L-aspartate binding site. The aspartate stretch occupies residues 197-200 (QMFK). Arg-219 lines the L-aspartate pocket. ATP is bound by residues 219 to 221 (RDE) and Gln-228. His-447 contacts L-aspartate. Glu-481 contributes to the ATP binding site. Arg-488 is an L-aspartate binding site. 533 to 536 (GLDR) provides a ligand contact to ATP.

It belongs to the class-II aminoacyl-tRNA synthetase family. Type 1 subfamily. Homodimer.

It is found in the cytoplasm. The catalysed reaction is tRNA(Asx) + L-aspartate + ATP = L-aspartyl-tRNA(Asx) + AMP + diphosphate. Aspartyl-tRNA synthetase with relaxed tRNA specificity since it is able to aspartylate not only its cognate tRNA(Asp) but also tRNA(Asn). Reaction proceeds in two steps: L-aspartate is first activated by ATP to form Asp-AMP and then transferred to the acceptor end of tRNA(Asp/Asn). The polypeptide is Aspartate--tRNA(Asp/Asn) ligase (Elusimicrobium minutum (strain Pei191)).